A 245-amino-acid chain; its full sequence is 7-cyano-7-deazaguanine synthase 2 (245 aa).

12–22 (FSGGQDSTTCL) is a binding site for ATP. Residues cysteine 200, cysteine 215, cysteine 218, and cysteine 221 each coordinate Zn(2+).

The protein belongs to the QueC family. Requires Zn(2+) as cofactor.

The catalysed reaction is 7-carboxy-7-deazaguanine + NH4(+) + ATP = 7-cyano-7-deazaguanine + ADP + phosphate + H2O + H(+). It functions in the pathway purine metabolism; 7-cyano-7-deazaguanine biosynthesis. Its function is as follows. Catalyzes the ATP-dependent conversion of 7-carboxy-7-deazaguanine (CDG) to 7-cyano-7-deazaguanine (preQ(0)). In Mesorhizobium japonicum (strain LMG 29417 / CECT 9101 / MAFF 303099) (Mesorhizobium loti (strain MAFF 303099)), this protein is 7-cyano-7-deazaguanine synthase 2.